We begin with the raw amino-acid sequence, 178 residues long: Putative RING-H2 finger protein ATL19 (178 aa).

A helical transmembrane segment spans residues 11-31 (LISVLGLAVFIGLCILLVVLI). The RING-type; atypical zinc-finger motif lies at 130–172 (CAICLSGYVVNEECRVFPVCRHIYHALCIDAWLKNHLTCPTCR).

This sequence belongs to the RING-type zinc finger family. ATL subfamily.

Its subcellular location is the membrane. The enzyme catalyses S-ubiquitinyl-[E2 ubiquitin-conjugating enzyme]-L-cysteine + [acceptor protein]-L-lysine = [E2 ubiquitin-conjugating enzyme]-L-cysteine + N(6)-ubiquitinyl-[acceptor protein]-L-lysine.. Its pathway is protein modification; protein ubiquitination. The chain is Putative RING-H2 finger protein ATL19 (ATL19) from Arabidopsis thaliana (Mouse-ear cress).